We begin with the raw amino-acid sequence, 238 residues long: Purine nucleoside phosphorylase DeoD-type (238 aa).

His4 is a binding site for a purine D-ribonucleoside. Phosphate-binding positions include Gly20, Arg24, Arg43, and 87–90; that span reads RIGS. Residues 181-183 and 205-206 each bind a purine D-ribonucleoside; these read EME and SD. The Proton donor role is filled by Asp206.

The protein belongs to the PNP/UDP phosphorylase family. In terms of assembly, homohexamer; trimer of homodimers.

The enzyme catalyses a purine D-ribonucleoside + phosphate = a purine nucleobase + alpha-D-ribose 1-phosphate. It carries out the reaction a purine 2'-deoxy-D-ribonucleoside + phosphate = a purine nucleobase + 2-deoxy-alpha-D-ribose 1-phosphate. Functionally, catalyzes the reversible phosphorolytic breakdown of the N-glycosidic bond in the beta-(deoxy)ribonucleoside molecules, with the formation of the corresponding free purine bases and pentose-1-phosphate. This chain is Purine nucleoside phosphorylase DeoD-type, found in Mycoplasma pneumoniae (strain ATCC 29342 / M129 / Subtype 1) (Mycoplasmoides pneumoniae).